Consider the following 510-residue polypeptide: NAD(P)H-quinone oxidoreductase subunit 2 B, chloroplastic (510 aa).

13 consecutive transmembrane segments (helical) span residues 24–44 (LLLFDGSFIFPECILIFGLIL), 59–79 (WFYFISSTSLVMSIAALLFRW), 99–119 (IFQFLILLCSTLCIPLSVEYI), 124–144 (MAITEFLLFVLTATLGGMFLC), 150–170 (ITIFVAPECFSLCSYLLSGYT), 184–204 (LLMGGASSSILVHGFSWLYGL), 229–249 (ISIALIFITVGIGFKLSLAPF), 295–315 (WHLLLEILAILSMILGNLIAI), 323–343 (MLAYSSIGQIGYVIIGIIVGD), 354–374 (YMLFYISMNLGTFARIVLFGL), 395–415 (ALSLALCLLSLGGLPPLAGFF), 418–438 (LHLFWCGWQAGLYFLVSIGLL), and 484–504 (MIVCVIASTIPGISMNPILAI).

The protein belongs to the complex I subunit 2 family. In terms of assembly, NDH is composed of at least 16 different subunits, 5 of which are encoded in the nucleus.

It is found in the plastid. Its subcellular location is the chloroplast thylakoid membrane. The catalysed reaction is a plastoquinone + NADH + (n+1) H(+)(in) = a plastoquinol + NAD(+) + n H(+)(out). The enzyme catalyses a plastoquinone + NADPH + (n+1) H(+)(in) = a plastoquinol + NADP(+) + n H(+)(out). Its function is as follows. NDH shuttles electrons from NAD(P)H:plastoquinone, via FMN and iron-sulfur (Fe-S) centers, to quinones in the photosynthetic chain and possibly in a chloroplast respiratory chain. The immediate electron acceptor for the enzyme in this species is believed to be plastoquinone. Couples the redox reaction to proton translocation, and thus conserves the redox energy in a proton gradient. The protein is NAD(P)H-quinone oxidoreductase subunit 2 B, chloroplastic of Acorus calamus (Sweet flag).